The chain runs to 281 residues: 18S rRNA (guanine-N(7))-methyltransferase (281 aa).

A compositionally biased stretch (polar residues) spans 212–231 (LPKGLTESQDADQASESMFT). The segment at 212-281 (LPKGLTESQD…YTGRKRKPRF (70 aa)) is disordered. A compositionally biased stretch (basic and acidic residues) spans 242–256 (RDLVKKSREWVLEKK).

It belongs to the class I-like SAM-binding methyltransferase superfamily. BUD23/WBSCR22 family. Heterodimer with TRMT112; this heterodimerization is necessary for the metabolic stability and activity of the catalytic subunit BUD23. Interacts with GRIP1. Post-translationally, may be ubiquitinated and targeted to degradation in response to pro-inflammatory cytokine signaling.

It is found in the nucleus. The protein localises to the nucleoplasm. It localises to the cytoplasm. The protein resides in the perinuclear region. It catalyses the reaction a guanosine in 18S rRNA + S-adenosyl-L-methionine = an N(7)-methylguanosine in 18S rRNA + S-adenosyl-L-homocysteine. In terms of biological role, S-adenosyl-L-methionine-dependent methyltransferase that specifically methylates the N(7) position of a guanine in 18S rRNA. Requires the methyltransferase adapter protein TRM112 for full rRNA methyltransferase activity. Involved in the pre-rRNA processing steps leading to small-subunit rRNA production independently of its RNA-modifying catalytic activity. Important for biogenesis end export of the 40S ribosomal subunit independent on its methyltransferase activity. Locus-specific steroid receptor coactivator. Potentiates transactivation by glucocorticoid (NR3C1), mineralocorticoid (NR3C2), androgen (AR) and progesterone (PGR) receptors. Required for the maintenance of open chromatin at the TSC22D3/GILZ locus to facilitate NR3C1 loading on the response elements. Required for maintenance of dimethylation on histone H3 'Lys-79' (H3K79me2), although direct histone methyltransferase activity is not observed in vitro. The sequence is that of 18S rRNA (guanine-N(7))-methyltransferase from Mus musculus (Mouse).